The primary structure comprises 446 residues: Nuclear envelope morphology protein 1 (446 aa).

The disordered stretch occupies residues 53-80; that stretch reads VDQQYDHSSSHLKESDQNQERKNSVPKK. The segment covering 56-75 has biased composition (basic and acidic residues); sequence QYDHSSSHLKESDQNQERKN. A helical membrane pass occupies residues 87–103; that stretch reads ILIEKIASILWALLLFL. The interval 132 to 168 is disordered; it reads HTDKRNRGSNASENELPVSSSNINDSSEKTNPKNCNL. Residues 139-156 show a composition bias toward polar residues; sequence GSNASENELPVSSSNIND. The 178-residue stretch at 247–424 folds into the FCP1 homology domain; that stretch reads NTQKKKKLVI…LNLLPFLEAM (178 aa).

It belongs to the Dullard family. As to quaternary structure, component of the NEM1-SPO7 complex.

It localises to the endoplasmic reticulum membrane. Its subcellular location is the nucleus membrane. The enzyme catalyses O-phospho-L-seryl-[protein] + H2O = L-seryl-[protein] + phosphate. It carries out the reaction O-phospho-L-threonyl-[protein] + H2O = L-threonyl-[protein] + phosphate. In terms of biological role, catalytic component of the NEM1-SPO7 complex which acts as a phosphatase and dephosphorylates the phosphatidic acid phosphohydrolase PAH1. Essential for the formation of a spherical nucleus and meiotic division. The NEM1-SPOo7 protein phosphatase is required for efficient mitophagy under prolonged respiration, as well as for reticulophagy and pexophagy. This chain is Nuclear envelope morphology protein 1 (NEM1), found in Saccharomyces cerevisiae (strain ATCC 204508 / S288c) (Baker's yeast).